Here is a 98-residue protein sequence, read N- to C-terminus: Growth-regulated protein homolog gamma (98 aa).

The signal sequence occupies residues 1–29 (MAPAASSAPRLLRAAMLLLLLVAAGRRAA). Intrachain disulfides connect Cys-39-Cys-65 and Cys-41-Cys-81.

This sequence belongs to the intercrine alpha (chemokine CxC) family.

It localises to the secreted. This chain is Growth-regulated protein homolog gamma, found in Bos taurus (Bovine).